Reading from the N-terminus, the 613-residue chain is MVAVEFKVSESGRPRPEKNPKLGFFVYLLGSAAIIGGFLFGYDTSVVSAAMLYVPEAPGLKPMGTVWKEVIVSITPGMAAVGAWFSGAGSDRYGRKPIIIGSTLIFVCGAVICAVAWTKIVMLIGRIFLGVGIGFASMVVPVYLGEASPTHVRGTLVSAFAMMISFGQVVANIMGGVFSYWEPYTIGWRLMFAFAGIPALIQFVCFIFLPETPRWLYENGHTEQAEQVLEKIYGGNTEWIEYELAEIKTYAEERQKQMEEEKKSGPVIWRILKTPHVLKACFIGSMLQAFQQLAGINTILYYTADIIRSAGIENYHTIIWISVILSICNLIGPFAPMFFIEKLGRRKLFLFSCAGVVVSLVLIGVSFLLVGNDSAPNFDRSAYLLAGNYQSNGEAESCLMLSNCDSCVTSEHCGFCEDSETRTGFCLPVDHNDVTLYSSTGLCTNGLDKSNSSFPNATSYVWQKHHCTTSYTILPIVMMGVYLLTFSCGFTSLPWVLNSEFYPMWARSTCVSISTLSNWVFNLIIALTYLSLTHAITKYGAFWLYAIFTIIAFIFIYFLVPETTGYSIDEVEMLFMNKRQRNIAMQARQAKLDAASDKDKNSSTSLSTETITM.

At 1 to 21 (MVAVEFKVSESGRPRPEKNPK) the chain is on the cytoplasmic side. Residues 22 to 42 (LGFFVYLLGSAAIIGGFLFGY) form a helical membrane-spanning segment. The Extracellular segment spans residues 43–69 (DTSVVSAAMLYVPEAPGLKPMGTVWKE). Residues 70-90 (VIVSITPGMAAVGAWFSGAGS) traverse the membrane as a helical segment. At 91 to 96 (DRYGRK) the chain is on the cytoplasmic side. The helical transmembrane segment at 97 to 117 (PIIIGSTLIFVCGAVICAVAW) threads the bilayer. At 118–119 (TK) the chain is on the extracellular side. Residues 120 to 140 (IVMLIGRIFLGVGIGFASMVV) traverse the membrane as a helical segment. Residues 141–157 (PVYLGEASPTHVRGTLV) lie on the Cytoplasmic side of the membrane. A helical transmembrane segment spans residues 158–178 (SAFAMMISFGQVVANIMGGVF). Topologically, residues 179–189 (SYWEPYTIGWR) are extracellular. Residues 190–210 (LMFAFAGIPALIQFVCFIFLP) form a helical membrane-spanning segment. At 211-279 (ETPRWLYENG…RILKTPHVLK (69 aa)) the chain is on the cytoplasmic side. The helical transmembrane segment at 280-300 (ACFIGSMLQAFQQLAGINTIL) threads the bilayer. Topologically, residues 301–317 (YYTADIIRSAGIENYHT) are extracellular. Residues 318–338 (IIWISVILSICNLIGPFAPMF) form a helical membrane-spanning segment. Topologically, residues 339–347 (FIEKLGRRK) are cytoplasmic. The helical transmembrane segment at 348-368 (LFLFSCAGVVVSLVLIGVSFL) threads the bilayer. Over 369–472 (LVGNDSAPNF…QKHHCTTSYT (104 aa)) the chain is Extracellular. N372, N451, and N456 each carry an N-linked (GlcNAc...) asparagine glycan. The helical transmembrane segment at 473-493 (ILPIVMMGVYLLTFSCGFTSL) threads the bilayer. Residues 494–515 (PWVLNSEFYPMWARSTCVSIST) lie on the Cytoplasmic side of the membrane. Residues 516–536 (LSNWVFNLIIALTYLSLTHAI) traverse the membrane as a helical segment. The Extracellular portion of the chain corresponds to 537-539 (TKY). Residues 540–560 (GAFWLYAIFTIIAFIFIYFLV) traverse the membrane as a helical segment. At 561–613 (PETTGYSIDEVEMLFMNKRQRNIAMQARQAKLDAASDKDKNSSTSLSTETITM) the chain is on the cytoplasmic side. The segment at 594–613 (AASDKDKNSSTSLSTETITM) is disordered. A compositionally biased stretch (polar residues) spans 602 to 613 (SSTSLSTETITM).

It belongs to the major facilitator superfamily. Sugar transporter (TC 2.A.1.1) family. In terms of tissue distribution, expressed in the excretory canal cell and in pairs of amphid and sheath glia.

The protein resides in the cell membrane. It is found in the perikaryon. The enzyme catalyses myo-inositol(out) + H(+)(out) = myo-inositol(in) + H(+)(in). In terms of biological role, h(+)-myo-inositol cotransporter. Probably by promoting the transport of myo-inositol regulates intracellular osmosis in response to hyperosmotic stress. The protein is Proton myo-inositol cotransporter hmit-1.2 of Caenorhabditis elegans.